A 1156-amino-acid chain; its full sequence is ATP-dependent RNA helicase glh-4 (1156 aa).

4 disordered regions span residues 1–81 (MSFS…GAPS), 194–213 (TGVG…GQQP), 231–423 (SSSG…DSST), and 436–522 (HRAS…SGLG). Residues 12–22 (AEVKVAEDVPE) show a composition bias toward basic and acidic residues. Over residues 24–34 (NVPPPVEPPRA) the composition is skewed to pro residues. 3 stretches are compositionally biased toward polar residues: residues 60–73 (ITTS…TTPK), 194–211 (TGVG…SFGQ), and 243–258 (TESS…TSQP). Residues 259 to 281 (GFGGDSSTGFGSGLKAGFGGHGA) are compositionally biased toward gly residues. Residues 307–319 (ASSSNESAFGQQS) are compositionally biased toward polar residues. Composition is skewed to gly residues over residues 321–332 (GFGGATKNGFGG) and 342–358 (SKAG…GGQK). Composition is skewed to polar residues over residues 362–371 (TESSGFPTKE) and 395–406 (PSTTDSSSGQQT). Over residues 408-423 (GFGGASKPGFGGDSST) the composition is skewed to gly residues. Composition is skewed to polar residues over residues 440–451 (TAENSGLPTETT) and 464–476 (ASSS…GQQS). A compositionally biased stretch (gly residues) spans 478 to 489 (GFGGATKNGFGG). 5 CCHC-type zinc fingers span residues 570 to 587 (RGCH…ECDK), 593 to 610 (FPCR…DCDQ), 616 to 633 (GPCR…DCDQ), 639 to 656 (GPCR…DCQN), and 665 to 682 (EPCR…ECPT). A Q motif motif is present at residues 736-764 (SFDGFKILPQDLHDNLKRMKMNRPTPIQR). One can recognise a Helicase ATP-binding domain in the interval 767–951 (FFPIMHGNDV…LPKFVKEGYT (185 aa)). 780–787 (AHTGSGKT) contributes to the ATP binding site. The DEAD box motif lies at 897-900 (DEAD). The region spanning 986–1139 (GIDENTVTLL…EVPEWLTEGA (154 aa)) is the Helicase C-terminal domain. The interval 1135-1156 (LTEGAGHQEEGGDDWNEQEQEW) is disordered. Acidic residues predominate over residues 1145–1156 (GGDDWNEQEQEW).

It belongs to the DEAD box helicase family. DDX4/VASA subfamily. Interacts (via C-terminus) with kgb-1.

The catalysed reaction is ATP + H2O = ADP + phosphate + H(+). Probable ATP-binding RNA helicase. May act redundantly with the P-granule component glh-1 to regulate the formation of the granular structure of P-granules in embryos. May protect somatic cells from excessive apoptosis during normal development. This is ATP-dependent RNA helicase glh-4 from Caenorhabditis elegans.